The following is a 427-amino-acid chain: Glutamate-1-semialdehyde 2,1-aminomutase (427 aa).

Position 265 is an N6-(pyridoxal phosphate)lysine (lysine 265).

The protein belongs to the class-III pyridoxal-phosphate-dependent aminotransferase family. HemL subfamily. Homodimer. The cofactor is pyridoxal 5'-phosphate.

It is found in the cytoplasm. It catalyses the reaction (S)-4-amino-5-oxopentanoate = 5-aminolevulinate. It functions in the pathway porphyrin-containing compound metabolism; protoporphyrin-IX biosynthesis; 5-aminolevulinate from L-glutamyl-tRNA(Glu): step 2/2. In Burkholderia vietnamiensis (strain G4 / LMG 22486) (Burkholderia cepacia (strain R1808)), this protein is Glutamate-1-semialdehyde 2,1-aminomutase.